Consider the following 219-residue polypeptide: MDPGREDEVPLAATSPESRRTRSNGRGKATVGDAPPPAETVVSTKAAPLPTGGWKKGIAILDFILRLGAIGAAMGASILMGTNEQILPFFTQFLQFHAQWDDFPVFKLFVVLNALAGGFLILSLPLSIVCIVRPLAVGPRFLLLITDLVNMATVIAAASAAAAIVYVAHNGSQDANWIAICQQFTDFCQGTSEAVVVSFVAAVFLVCLIVVSTLALKRT.

Residues 1–43 are disordered; it reads MDPGREDEVPLAATSPESRRTRSNGRGKATVGDAPPPAETVVS. The Cytoplasmic segment spans residues 1–57; that stretch reads MDPGREDEVPLAATSPESRRTRSNGRGKATVGDAPPPAETVVSTKAAPLPTGGWKKG. Residues 58–78 form a helical membrane-spanning segment; that stretch reads IAILDFILRLGAIGAAMGASI. Over 79-108 the chain is Extracellular; the sequence is LMGTNEQILPFFTQFLQFHAQWDDFPVFKL. A helical transmembrane segment spans residues 109-129; it reads FVVLNALAGGFLILSLPLSIV. Residues 130-147 lie on the Cytoplasmic side of the membrane; it reads CIVRPLAVGPRFLLLITD. A helical membrane pass occupies residues 148 to 168; the sequence is LVNMATVIAAASAAAAIVYVA. Over 169-193 the chain is Extracellular; it reads HNGSQDANWIAICQQFTDFCQGTSE. N-linked (GlcNAc...) asparagine glycosylation is present at Asn-170. A helical transmembrane segment spans residues 194–214; it reads AVVVSFVAAVFLVCLIVVSTL. Residues 215-219 lie on the Cytoplasmic side of the membrane; that stretch reads ALKRT.

Belongs to the Casparian strip membrane proteins (CASP) family. As to quaternary structure, homodimer and heterodimers.

It is found in the cell membrane. Functionally, regulates membrane-cell wall junctions and localized cell wall deposition. Required for establishment of the Casparian strip membrane domain (CSD) and the subsequent formation of Casparian strips, a cell wall modification of the root endodermis that determines an apoplastic barrier between the intraorganismal apoplasm and the extraorganismal apoplasm and prevents lateral diffusion. The protein is Casparian strip membrane protein 3 of Lotus japonicus (Lotus corniculatus var. japonicus).